We begin with the raw amino-acid sequence, 142 residues long: Large ribosomal subunit protein uL11 (142 aa).

This sequence belongs to the universal ribosomal protein uL11 family. Part of the ribosomal stalk of the 50S ribosomal subunit. Interacts with L10 and the large rRNA to form the base of the stalk. L10 forms an elongated spine to which L12 dimers bind in a sequential fashion forming a multimeric L10(L12)X complex. Post-translationally, one or more lysine residues are methylated.

Its function is as follows. Forms part of the ribosomal stalk which helps the ribosome interact with GTP-bound translation factors. This chain is Large ribosomal subunit protein uL11, found in Rhodopseudomonas palustris (strain HaA2).